A 92-amino-acid chain; its full sequence is MARSLKKGPFVHYKLDKKVQENVESGKNSVVKTWSRASMITPDFVGQTIAVHNGRQFVPVYVTENMVGHKLGEFSPTRSFRGHAGAKNKGKK.

Residues 72 to 92 form a disordered region; sequence GEFSPTRSFRGHAGAKNKGKK. Residues 80–92 show a composition bias toward basic residues; sequence FRGHAGAKNKGKK.

Belongs to the universal ribosomal protein uS19 family.

Functionally, protein S19 forms a complex with S13 that binds strongly to the 16S ribosomal RNA. In Flavobacterium johnsoniae (strain ATCC 17061 / DSM 2064 / JCM 8514 / BCRC 14874 / CCUG 350202 / NBRC 14942 / NCIMB 11054 / UW101) (Cytophaga johnsonae), this protein is Small ribosomal subunit protein uS19.